The following is a 248-amino-acid chain: Peptidyl-tRNA hydrolase (248 aa).

Tyrosine 14 is a tRNA binding site. The Proton acceptor role is filled by histidine 19. Positions 64, 66, and 112 each coordinate tRNA. The disordered stretch occupies residues 190–248 (PRSSTGEASKGRKKAQKSEPGVAKTPAKAATPEAPAAGDIPAAPEDSRSPMQKLLDKFK). Positions 212–226 (AKTPAKAATPEAPAA) are enriched in low complexity.

The protein belongs to the PTH family. In terms of assembly, monomer.

It localises to the cytoplasm. The enzyme catalyses an N-acyl-L-alpha-aminoacyl-tRNA + H2O = an N-acyl-L-amino acid + a tRNA + H(+). Functionally, hydrolyzes ribosome-free peptidyl-tRNAs (with 1 or more amino acids incorporated), which drop off the ribosome during protein synthesis, or as a result of ribosome stalling. Its function is as follows. Catalyzes the release of premature peptidyl moieties from peptidyl-tRNA molecules trapped in stalled 50S ribosomal subunits, and thus maintains levels of free tRNAs and 50S ribosomes. The sequence is that of Peptidyl-tRNA hydrolase from Ruegeria sp. (strain TM1040) (Silicibacter sp.).